The primary structure comprises 705 residues: DNA ligase (705 aa).

NAD(+) contacts are provided by residues 43–47 (DAEYD), 92–93 (SL), and Asp-123. Lys-125 functions as the N6-AMP-lysine intermediate in the catalytic mechanism. Positions 146, 184, 304, and 328 each coordinate NAD(+). Residues Cys-422, Cys-425, Cys-440, and Cys-445 each contribute to the Zn(2+) site. The BRCT domain maps to 607-696 (TPVTPLAGKK…EEISGQAADD (90 aa)). Positions 684–705 (SESEEISGQAADDYENSLLRVQ) are disordered.

This sequence belongs to the NAD-dependent DNA ligase family. LigA subfamily. Mg(2+) is required as a cofactor. The cofactor is Mn(2+).

The enzyme catalyses NAD(+) + (deoxyribonucleotide)n-3'-hydroxyl + 5'-phospho-(deoxyribonucleotide)m = (deoxyribonucleotide)n+m + AMP + beta-nicotinamide D-nucleotide.. In terms of biological role, DNA ligase that catalyzes the formation of phosphodiester linkages between 5'-phosphoryl and 3'-hydroxyl groups in double-stranded DNA using NAD as a coenzyme and as the energy source for the reaction. It is essential for DNA replication and repair of damaged DNA. In Oleidesulfovibrio alaskensis (strain ATCC BAA-1058 / DSM 17464 / G20) (Desulfovibrio alaskensis), this protein is DNA ligase.